The chain runs to 854 residues: Iron and copper transporter IacT (854 aa).

The TonB box signature appears at 187 to 194 (IELIVTAQ). Positions 199–315 (DAQDVPLSLT…PAGVVNVISR (117 aa)) constitute a TBDR plug domain. Residues 320–854 (QPEMRISALY…TYGVRVSASF (535 aa)) enclose the TBDR beta-barrel domain. Positions 839–854 (GFGDPVTYGVRVSASF) match the TonB C-terminal box motif.

It belongs to the TonB-dependent receptor family.

Its subcellular location is the cell outer membrane. In terms of biological role, involved in the TonB-dependent uptake of copper and iron under conditions in which the concentration of copper exceeds that of the iron. The sequence is that of Iron and copper transporter IacT from Nostoc sp. (strain PCC 7120 / SAG 25.82 / UTEX 2576).